The sequence spans 180 residues: UPF0227 protein Shew_1627 (180 aa).

This sequence belongs to the UPF0227 family.

The polypeptide is UPF0227 protein Shew_1627 (Shewanella loihica (strain ATCC BAA-1088 / PV-4)).